The chain runs to 117 residues: Nascent polypeptide-associated complex protein (117 aa).

One can recognise an NAC-A/B domain in the interval 9–77 (PKQLKQMQRA…ARECDLEAEV (69 aa)).

The protein belongs to the NAC-alpha family. In terms of assembly, homodimer. Interacts with the ribosome. Binds ribosomal RNA.

Functionally, contacts the emerging nascent chain on the ribosome. The polypeptide is Nascent polypeptide-associated complex protein (Methanothermobacter marburgensis (strain ATCC BAA-927 / DSM 2133 / JCM 14651 / NBRC 100331 / OCM 82 / Marburg) (Methanobacterium thermoautotrophicum)).